The sequence spans 1229 residues: DNA-directed RNA polymerase subunit beta (1229 aa).

The segment at E1175–E1229 is disordered. Acidic residues-rich tracts occupy residues E1195–D1204 and D1211–E1229.

This sequence belongs to the RNA polymerase beta chain family. As to quaternary structure, the RNAP catalytic core consists of 2 alpha, 1 beta, 1 beta' and 1 omega subunit. When a sigma factor is associated with the core the holoenzyme is formed, which can initiate transcription.

It catalyses the reaction RNA(n) + a ribonucleoside 5'-triphosphate = RNA(n+1) + diphosphate. Functionally, DNA-dependent RNA polymerase catalyzes the transcription of DNA into RNA using the four ribonucleoside triphosphates as substrates. The polypeptide is DNA-directed RNA polymerase subunit beta (Caldicellulosiruptor saccharolyticus (strain ATCC 43494 / DSM 8903 / Tp8T 6331)).